The chain runs to 136 residues: Large ribosomal subunit protein uL16 (136 aa).

Belongs to the universal ribosomal protein uL16 family. In terms of assembly, part of the 50S ribosomal subunit.

Its function is as follows. Binds 23S rRNA and is also seen to make contacts with the A and possibly P site tRNAs. In Erwinia tasmaniensis (strain DSM 17950 / CFBP 7177 / CIP 109463 / NCPPB 4357 / Et1/99), this protein is Large ribosomal subunit protein uL16.